The chain runs to 638 residues: MHLSELTHPNQLHGLSIAQLTQIAAQIRDKHLETVAATGGHLGPGLGVVELTLALYQTLDLEKDRVVWDVGHQAYPHKMLTGRYNNFHTLRQKGGIAGYLNRRESPFDHFGAGHASTSISAALGMAIARDLKGENFKVVAIIGDGALTGGMALEAINHAGHLPHTNLMVVLNDNEMSISPNVGAIPRYLNKIRLSPQVQFITDNLEEQFKHIPFFGENLTPEMQRLKEGMKRLAVPKVGAVFEELGFTYVGPVDGHNLEELIATFQHAHTIPGPVLVHVATVKGKGYAIAEKDQVGYHAQNPFDLVTGKAKPSSKPKPPSYSKVFGETLTKLAENDPRIVGITAAMATGTGLDILQKRVPKQYIDVGIAEQHAVTMAAGMATQGMRPVAAIYSTFLQRAYDQIVHDVCIQKLPVFFCMDRAGIVGADGPTHQGMYDIAYLRCLPNMVLMAPKDEAELQRMIVTGINYTDGPIALRYPRGNGYGVALMEEGWEPLEIGKGELLRSGEDLLLVAYGSMVYPAMQVAEILKEHGMSAAVINARFAKPLDTELILPLAKQIGRVVTLEEGCLMGGFGSAVLEALQEADILVPVLRLGVPDILVEHASPDESKADLGLTPPQMAETIMQKFGVPQRATVVTAS.

Thiamine diphosphate contacts are provided by residues His-72 and 113–115 (GHA). Position 144 (Asp-144) interacts with Mg(2+). Thiamine diphosphate-binding positions include 145–146 (GA), Asn-174, Tyr-287, and Glu-370. Position 174 (Asn-174) interacts with Mg(2+).

It belongs to the transketolase family. DXPS subfamily. In terms of assembly, homodimer. Requires Mg(2+) as cofactor. Thiamine diphosphate serves as cofactor.

It catalyses the reaction D-glyceraldehyde 3-phosphate + pyruvate + H(+) = 1-deoxy-D-xylulose 5-phosphate + CO2. Its pathway is metabolic intermediate biosynthesis; 1-deoxy-D-xylulose 5-phosphate biosynthesis; 1-deoxy-D-xylulose 5-phosphate from D-glyceraldehyde 3-phosphate and pyruvate: step 1/1. In terms of biological role, catalyzes the acyloin condensation reaction between C atoms 2 and 3 of pyruvate and glyceraldehyde 3-phosphate to yield 1-deoxy-D-xylulose-5-phosphate (DXP). This chain is 1-deoxy-D-xylulose-5-phosphate synthase, found in Thermosynechococcus vestitus (strain NIES-2133 / IAM M-273 / BP-1).